Consider the following 867-residue polypeptide: Glutamate receptor 1.2 (867 aa).

Positions 1-27 (MVRICIQTPILLSFLLVLLFFISNCFA) are cleaved as a signal peptide. The Extracellular segment spans residues 28-560 (SSQNNDDDKR…SMWVFFQPLT (533 aa)). Asparagine 301, asparagine 400, asparagine 496, and asparagine 499 each carry an N-linked (GlcNAc...) asparagine glycan. Residues 561–581 (PNLWITSAAFFVLTGIIVWLI) traverse the membrane as a helical segment. The Cytoplasmic portion of the chain corresponds to 582 to 590 (ERAENKEFQ). The chain crosses the membrane as a helical span at residues 591 to 611 (GSWPQQIGVVIWFGFSTLVYA). Residues 612-622 (HREKLQHNLSR) are Cytoplasmic-facing. Residues 623 to 643 (FVVTVWVFAVLILVTSYTATL) form a helical membrane-spanning segment. Over 644–792 (TSMMTVQQIR…NPITLYRFRG (149 aa)) the chain is Extracellular. Residues asparagine 676, asparagine 688, asparagine 699, and asparagine 748 are each glycosylated (N-linked (GlcNAc...) asparagine). A helical membrane pass occupies residues 793 to 813 (LFMITGVSFAFALAVLLILWL). Over 814-867 (RERWEILVNSVNIYFSQRLRHFRILFTRTIHPSPLGLDNPIGENAVQMAQRNRR) the chain is Cytoplasmic.

It belongs to the glutamate-gated ion channel (TC 1.A.10.1) family. May form heteromers. Expressed predominantly in roots and siliques.

The protein resides in the membrane. Functionally, glutamate-gated receptor that probably acts as a non-selective cation channel. May be involved in light-signal transduction and calcium homeostasis via the regulation of calcium influx into cells. In Arabidopsis thaliana (Mouse-ear cress), this protein is Glutamate receptor 1.2 (GLR1.2).